The following is a 233-amino-acid chain: Small ribosomal subunit protein uS5 (233 aa).

Over residues 1–13 the composition is skewed to polar residues; sequence MAEETQNTVATES. Positions 1-40 are disordered; sequence MAEETQNTVATESNNEDRKGRRGQRGEGRRGERRNRREEN. Residues 15–40 show a composition bias toward basic and acidic residues; sequence NEDRKGRRGQRGEGRRGERRNRREEN. The S5 DRBM domain maps to 45-108; it reads LLDRVVTINR…LDAKKHMFSV (64 aa).

Belongs to the universal ribosomal protein uS5 family. In terms of assembly, part of the 30S ribosomal subunit. Contacts proteins S4 and S8.

In terms of biological role, with S4 and S12 plays an important role in translational accuracy. Functionally, located at the back of the 30S subunit body where it stabilizes the conformation of the head with respect to the body. The chain is Small ribosomal subunit protein uS5 from Bifidobacterium longum (strain NCC 2705).